The following is a 76-amino-acid chain: DNA-directed RNA polymerase subunit epsilon (76 aa).

Belongs to the RNA polymerase subunit epsilon family. RNAP is composed of a core of 2 alpha, a beta and a beta' subunit. The core is associated with a delta subunit, and at least one of epsilon or omega. When a sigma factor is associated with the core the holoenzyme is formed, which can initiate transcription.

It carries out the reaction RNA(n) + a ribonucleoside 5'-triphosphate = RNA(n+1) + diphosphate. Its function is as follows. A non-essential component of RNA polymerase (RNAP). The chain is DNA-directed RNA polymerase subunit epsilon from Lactococcus lactis subsp. lactis (strain IL1403) (Streptococcus lactis).